The chain runs to 1073 residues: uncharacterized protein (1073 aa).

A signal peptide spans 1-36 (MAEIIHHSNVFTWAFHVSEYDGAPLLLLGSFSSVAS). N132 carries an N-linked (GlcNAc...) asparagine glycan. ATP is bound at residue 392–399 (ATAGIGKS). N-linked (GlcNAc...) asparagine glycans are attached at residues N544, N632, N703, N732, and N953.

This is an uncharacterized protein from Schizosaccharomyces pombe (strain 972 / ATCC 24843) (Fission yeast).